Reading from the N-terminus, the 201-residue chain is Small ribosomal subunit protein uS4 (201 aa).

The region spanning 92–155 (RRLDAVVYAL…QKLDIIQESV (64 aa)) is the S4 RNA-binding domain.

The protein belongs to the universal ribosomal protein uS4 family. In terms of assembly, part of the 30S ribosomal subunit. Contacts protein S5. The interaction surface between S4 and S5 is involved in control of translational fidelity.

Functionally, one of the primary rRNA binding proteins, it binds directly to 16S rRNA where it nucleates assembly of the body of the 30S subunit. Its function is as follows. With S5 and S12 plays an important role in translational accuracy. The sequence is that of Small ribosomal subunit protein uS4 from Staphylococcus carnosus (strain TM300).